A 627-amino-acid polypeptide reads, in one-letter code: MDLISVLPSASKSCVCLHKPLSSSTHKLKPFCRKIRILGMPRPRKSVLMVSSMSISVNTLVSDDAVQRRTGGYHSNLWNDDVIQFLSTPYGELAYRERAERLIDEVRNIFSSMSLEDGESSDLIQRLWMVDNVERLGIDRHFKNEIKSALDYVYSYWSQKGIGCGTKSIITDLNSTALGFRILRLHGYPVSAEVFKHFRNQIGQFVSCHSETEEDIRSIVNLYRASLIAFPGEKVMEEAEIFSEKYLKETLQKIPDCSLSREIGDVLEHGWHTNLPRFEARNYMDVFGQDTKNMESNRKAEKLLELAKLEFNIFQSIQKTELESLLRWWNDSGSPQITFTRHRHVEYYTLASCIAFEPQHSGFRLGFAKACHIITVLDDMYDLFGTVEELKLFTAAIKRWDPSATDCLPQYMKGIYMMVYNTVNEMSAEAQKAQRRDTLNYARQAWEVYLDSYMQEAKWIATGYLPTFEEYLENGKVSSGHRVSALQPMLTMDIPFPPHILKEVDFPSNLNDLACAILRLRGDTRCYQEDRARGEETSCISCYMKDNPGATEEDALNHLNVMISGVIKELNWELLKPDSSVPISSKKINFDITRAFHYGYKYRDGYSVSSVETKSLVMRTLLEPVPL.

Residues 1–51 (MDLISVLPSASKSCVCLHKPLSSSTHKLKPFCRKIRILGMPRPRKSVLMVS) constitute a chloroplast transit peptide. D378, D382, and D530 together coordinate Mg(2+). A DDXXD motif motif is present at residues 378 to 382 (DDMYD).

The protein belongs to the terpene synthase family. Tpsd subfamily. The cofactor is Mg(2+). Mn(2+) serves as cofactor.

It is found in the plastid. The protein resides in the chloroplast. It catalyses the reaction (2E)-geranyl diphosphate = (1S,5S)-beta-pinene + diphosphate. The catalysed reaction is (2E)-geranyl diphosphate = (1S,5S)-alpha-pinene + diphosphate. It participates in terpene metabolism; oleoresin biosynthesis. The protein operates within secondary metabolite biosynthesis; terpenoid biosynthesis. In terms of biological role, monoterpene synthase (TPS) involved in the biosynthesis of monoterpene natural products included in conifer oleoresin secretions and volatile emissions; these compounds contribute to biotic and abiotic stress defense against herbivores and pathogens. Catalyzes the conversion of (2E)-geranyl diphosphate (GPP) to (-)-beta-pinene and, to a lower extent, to (-)-alpha-pinene. This Pinus banksiana (Jack pine) protein is (-)-beta-pinene synthase 2, chloroplastic.